We begin with the raw amino-acid sequence, 177 residues long: Large ribosomal subunit protein uL6 (177 aa).

Belongs to the universal ribosomal protein uL6 family. In terms of assembly, part of the 50S ribosomal subunit.

Its function is as follows. This protein binds to the 23S rRNA, and is important in its secondary structure. It is located near the subunit interface in the base of the L7/L12 stalk, and near the tRNA binding site of the peptidyltransferase center. The chain is Large ribosomal subunit protein uL6 from Saccharophagus degradans (strain 2-40 / ATCC 43961 / DSM 17024).